A 430-amino-acid polypeptide reads, in one-letter code: DD-carboxypeptidase/endopeptidase Mpg (430 aa).

Positions 295, 299, and 375 each coordinate Zn(2+).

The protein belongs to the peptidase M23B family. In terms of assembly, monomer. Requires Zn(2+) as cofactor. In terms of processing, likely to be synthesized as a proenzyme. The cleavage of the N-terminal domain is probably required for the activation of the enzyme.

Its subcellular location is the cell outer membrane. Has both endopeptidase and DD-carboxypeptidase activities. Degrades cell wall peptidoglycan (PG) to allow consummate expression of pili. In Neisseria meningitidis serogroup B (strain ATCC BAA-335 / MC58), this protein is DD-carboxypeptidase/endopeptidase Mpg.